The primary structure comprises 288 residues: Diaminopimelate epimerase (288 aa).

Residues asparagine 14 and asparagine 67 each contribute to the substrate site. Cysteine 76 (proton donor) is an active-site residue. Substrate-binding positions include 77–78 (GN), asparagine 166, asparagine 199, and 217–218 (ER). Catalysis depends on cysteine 226, which acts as the Proton acceptor. 227–228 (GT) contacts substrate.

This sequence belongs to the diaminopimelate epimerase family. Homodimer.

Its subcellular location is the cytoplasm. The catalysed reaction is (2S,6S)-2,6-diaminopimelate = meso-2,6-diaminopimelate. Its pathway is amino-acid biosynthesis; L-lysine biosynthesis via DAP pathway; DL-2,6-diaminopimelate from LL-2,6-diaminopimelate: step 1/1. Its function is as follows. Catalyzes the stereoinversion of LL-2,6-diaminopimelate (L,L-DAP) to meso-diaminopimelate (meso-DAP), a precursor of L-lysine and an essential component of the bacterial peptidoglycan. This is Diaminopimelate epimerase from Bacillus mycoides (strain KBAB4) (Bacillus weihenstephanensis).